The primary structure comprises 597 residues: NADH-quinone oxidoreductase subunits H/I (597 aa).

The segment at 1–405 (MPDLSLFGHD…FPTPPVPADA (405 aa)) is NADH-quinone oxidoreductase subunit H. 9 helical membrane-spanning segments follow: residues 12–32 (FWLV…IPLV), 82–102 (PIYL…FAVI), 124–144 (VGVL…VLAG), 170–190 (MALC…SGIV), 195–215 (PTWF…SMVG), 260–280 (ALAT…NLIP), 286–306 (WWGL…FVWL), 318–338 (FMRL…MLVA), and 351–371 (ATGA…GLFL). The tract at residues 406 to 597 (HRVDNPKGGL…APAGAKGGAR (192 aa)) is NADH-quinone oxidoreductase subunit I. 4Fe-4S ferredoxin-type domains lie at 455–485 (LNRH…VEGA) and 501–530 (RVYQ…MTND). [4Fe-4S] cluster contacts are provided by Cys465, Cys468, Cys471, Cys475, Cys510, Cys513, Cys516, and Cys520.

This sequence in the N-terminal section; belongs to the complex I subunit 1 family. It in the C-terminal section; belongs to the complex I 23 kDa subunit family. In terms of assembly, NDH-1 is composed of 13 different subunits. Subunits NuoA, H/I, J, K, L, M, N constitute the membrane sector of the complex. It depends on [4Fe-4S] cluster as a cofactor.

The protein localises to the cell membrane. It carries out the reaction a quinone + NADH + 5 H(+)(in) = a quinol + NAD(+) + 4 H(+)(out). Functionally, NDH-1 shuttles electrons from NADH, via FMN and iron-sulfur (Fe-S) centers, to quinones in the respiratory chain. The immediate electron acceptor for the enzyme in this species is believed to be ubiquinone. Couples the redox reaction to proton translocation (for every two electrons transferred, four hydrogen ions are translocated across the cytoplasmic membrane), and thus conserves the redox energy in a proton gradient. This subunit may bind ubiquinone. The polypeptide is NADH-quinone oxidoreductase subunits H/I (nuoH/I) (Nocardia farcinica (strain IFM 10152)).